A 241-amino-acid chain; its full sequence is Zinc finger CCHC domain-containing protein 24 (241 aa).

Residues Ser-65 and Ser-93 each carry the phosphoserine modification. Residues 132-149 (YLCHLCFNKGHYIKDCPQ) form a CCHC-type zinc finger.

This Macaca fascicularis (Crab-eating macaque) protein is Zinc finger CCHC domain-containing protein 24 (ZCCHC24).